We begin with the raw amino-acid sequence, 1287 residues long: MVARSTDSLDGPGEGSVQPLPTAGGPSVKGKPGKRLSAPRGPFPRLADCAHFHYENVDFGHIQLLLSPDREGPSLSGENELVFGVQVTCQGRSWPVLRSYDDFRSLDAHLHRCIFDRRFSCLPELPPPPEGARAAQMLVPLLLQYLETLSGLVDSNLNCGPVLTWMELDNHGRRLLLSEEASLNIPAVAAAHVIKRYTAQAPDELSFEVGDIVSVIDMPPTEDRSWWRGKRGFQVGFFPSECVELFTERPGPGLKADADGPPCGIPAPQGISSLTSAVPRPRGKLAGLLRTFMRSRPSRQRLRQRGILRQRVFGCDLGEHLSNSGQDVPQVLRCCSEFIEAHGVVDGIYRLSGVSSNIQRLRHEFDSERIPELSGPAFLQDIHSVSSLCKLYFRELPNPLLTYQLYGKFSEAMSVPGEEERLVRVHDVIQQLPPPHYRTLEYLLRHLARMARHSANTSMHARNLAIVWAPNLLRSMELESVGMGGAAAFREVRVQSVVVEFLLTHVDVLFSDTFTSAGLDPAGRCLLPRPKSLAGSCPSTRLLTLEEAQARTQGRLGTPTEPTTPKAPASPAERRKGERGEKQRKPGGSSWKTFFALGRGPSVPRKKPLPWLGGTRAPPQPSGSRPDTVTLRSAKSEESLSSQASGAGLQRLHRLRRPHSSSDAFPVGPAPAGSCESLSSSSSSESSSSESSSSSSESSAAGLGALSGSPSHRTSAWLDDGDELDFSPPRCLEGLRGLDFDPLTFRCSSPTPGDPAPPASPAPPAPASAFPPRVTPQAISPRGPTSPASPAALDISEPLAVSVPPAVLELLGAGGAPASATPTPALSPGRSLRPHLIPLLLRGAEAPLTDACQQEMCSKLRGAQGPLGPDMESPLPPPPLSLLRPGGAPPPPPKNPARLMALALAERAQQVAEQQSQQECGGTPPASQSPFHRSLSLEVGGEPLGTSGSGPPPNSLAHPGAWVPGPPPYLPRQQSDGSLLRSQRPMGTSRRGLRGPAQVSAQLRAGGGGRDAPEAAAQSPCSVPSQVPTPGFFSPAPRECLPPFLGVPKPGLYPLGPPSFQPSSPAPVWRSSLGPPAPLDRGENLYYEIGASEGSPYSGPTRSWSPFRSMPPDRLNASYGMLGQSPPLHRSPDFLLSYPPAPSCFPPDHLGYSAPQHPARRPTPPEPLYVNLALGPRGPSPASSSSSSPPAHPRSRSDPGPPVPRLPQKQRAPWGPRTPHRVPGPWGPPEPLLLYRAAPPAYGRGGELHRGSLYRNGGQRGEGAGPPPPYPTPSWSLHSEGQTRSYC.

Residues 1–40 (MVARSTDSLDGPGEGSVQPLPTAGGPSVKGKPGKRLSAPR) are disordered. Ser8 carries the phosphoserine modification. Residues 59–168 (FGHIQLLLSP…CGPVLTWMEL (110 aa)) form the PX; atypical domain. Residues 186 to 248 (PAVAAAHVIK…PSECVELFTE (63 aa)) enclose the SH3 domain. Positions 315–510 (CDLGEHLSNS…FLLTHVDVLF (196 aa)) constitute a Rho-GAP domain. Disordered stretches follow at residues 551-792 (RTQG…SPAA), 813-832 (AGGA…GRSL), 859-1030 (KLRG…VPTP), 1056-1075 (GPPS…SLGP), 1090-1134 (GASE…SPDF), and 1146-1287 (PPDH…RSYC). Over residues 558-571 (TPTEPTTPKAPASP) the composition is skewed to low complexity. Ser570 bears the Phosphoserine mark. Over residues 572-584 (AERRKGERGEKQR) the composition is skewed to basic and acidic residues. Polar residues predominate over residues 622-645 (SGSRPDTVTLRSAKSEESLSSQAS). Phosphoserine is present on Ser636. Over residues 672-709 (AGSCESLSSSSSSESSSSESSSSSSESSAAGLGALSGS) the composition is skewed to low complexity. Ser727 carries the post-translational modification Phosphoserine. A compositionally biased stretch (pro residues) spans 752–766 (PGDPAPPASPAPPAP). 2 stretches are compositionally biased toward low complexity: residues 813 to 829 (AGGA…LSPG) and 896 to 919 (PARL…SQQE). Polar residues-rich tracts occupy residues 972-981 (RQQSDGSLLR) and 1019-1028 (SPCSVPSQVP). A Phosphotyrosine modification is found at Tyr1169. A compositionally biased stretch (low complexity) spans 1175–1189 (GPRGPSPASSSSSSP). Arg1244 bears the Omega-N-methylarginine mark. Residues 1274-1287 (SWSLHSEGQTRSYC) are compositionally biased toward polar residues.

This sequence belongs to the PX domain-containing GAP family. Specifically interacts with CDC42 and RHOQ/TC10 through its Rho-GAP domain. Interacts with NEK6.

Its function is as follows. May be involved in several stages of intracellular trafficking. Could play an important role in the regulation of glucose transport by insulin. May act as a downstream effector of RHOQ/TC10 in the regulation of insulin-stimulated glucose transport. In Homo sapiens (Human), this protein is Rho GTPase-activating protein 33 (ARHGAP33).